A 190-amino-acid polypeptide reads, in one-letter code: Xanthine phosphoribosyltransferase (190 aa).

Positions 20 and 27 each coordinate xanthine. 128–132 (ANGKA) contacts 5-phospho-alpha-D-ribose 1-diphosphate. Lys-156 provides a ligand contact to xanthine.

It belongs to the purine/pyrimidine phosphoribosyltransferase family. Xpt subfamily. As to quaternary structure, homodimer.

It localises to the cytoplasm. The catalysed reaction is XMP + diphosphate = xanthine + 5-phospho-alpha-D-ribose 1-diphosphate. It participates in purine metabolism; XMP biosynthesis via salvage pathway; XMP from xanthine: step 1/1. Converts the preformed base xanthine, a product of nucleic acid breakdown, to xanthosine 5'-monophosphate (XMP), so it can be reused for RNA or DNA synthesis. The polypeptide is Xanthine phosphoribosyltransferase (Pseudomonas fluorescens (strain ATCC BAA-477 / NRRL B-23932 / Pf-5)).